Reading from the N-terminus, the 469-residue chain is Tetratricopeptide repeat protein 38 (469 aa).

At alanine 2 the chain carries N-acetylalanine. Serine 5 bears the Phosphoserine mark. TPR repeat units follow at residues arginine 108 to aspartate 141, serine 180 to aspartate 213, and cysteine 252 to alanine 285.

The protein belongs to the TTC38 family.

The protein is Tetratricopeptide repeat protein 38 (TTC38) of Pongo abelii (Sumatran orangutan).